The sequence spans 162 residues: Interleukin-15 (162 aa).

A signal peptide spans 1-29; the sequence is MRISKPHLRSVSIQCYLCLLLNSHFLTEA. A propeptide spanning residues 30–48 is cleaved from the precursor; it reads GIHVFILGCFSAGLPKTEA. Cystine bridges form between Cys83/Cys133 and Cys90/Cys136. A glycan (N-linked (GlcNAc...) asparagine) is linked at Asn127.

The protein belongs to the IL-15/IL-21 family.

It is found in the secreted. Its function is as follows. Cytokine that plays a major role in the development of inflammatory and protective immune responses to microbial invaders and parasites by modulating immune cells of both the innate and adaptive immune systems. Stimulates the proliferation of natural killer cells, T-cells and B-cells and promotes the secretion of several cytokines. In monocytes, induces the production of IL8 and monocyte chemotactic protein 1/CCL2, two chemokines that attract neutrophils and monocytes respectively to sites of infection. Unlike most cytokines, which are secreted in soluble form, IL15 is expressed in association with its high affinity IL15RA on the surface of IL15-producing cells and delivers signals to target cells that express IL2RB and IL2RG receptor subunits. Binding to its receptor triggers the phosphorylation of JAK1 and JAK3 and the recruitment and subsequent phosphorylation of signal transducer and activator of transcription-3/STAT3 and STAT5. In mast cells, induces the rapid tyrosine phosphorylation of STAT6 and thereby controls mast cell survival and release of cytokines such as IL4. The sequence is that of Interleukin-15 (IL15) from Macaca thibetana (Pere David's macaque).